The following is a 133-amino-acid chain: DUF35 domain-containing scaffold protein (133 aa).

The Zn(2+) site is built by C23, C26, C37, and C40.

It belongs to the scaffold protein DUF35 family. Interacts with acetoacetyl-CoA thiolase and HMG-CoA synthase (HMGCS) that catalyzes the first and second step in the mevalonate pathway, respectively.

Its function is as follows. Functions as a scaffold to connect the acetoacetyl-CoA thiolase and HMG-CoA synthase (HMGCS) dimers in the channeling thiolase/HMGCS complex, which allows for efficient coupling of the endergonic thiolase reaction with the exergonic HMGCS reaction. The polypeptide is DUF35 domain-containing scaffold protein (Methanothermobacter thermautotrophicus (strain ATCC 29096 / DSM 1053 / JCM 10044 / NBRC 100330 / Delta H) (Methanobacterium thermoautotrophicum)).